Consider the following 468-residue polypeptide: Glutamate--tRNA ligase 2 (468 aa).

Residues 9–19 (PSPTGFLHIGG) carry the 'HIGH' region motif. The short motif at 238 to 242 (KLSKR) is the 'KMSKS' region element. Lys-241 provides a ligand contact to ATP.

The protein belongs to the class-I aminoacyl-tRNA synthetase family. Glutamate--tRNA ligase type 1 subfamily. As to quaternary structure, monomer.

The protein resides in the cytoplasm. The catalysed reaction is tRNA(Glu) + L-glutamate + ATP = L-glutamyl-tRNA(Glu) + AMP + diphosphate. Catalyzes the attachment of glutamate to tRNA(Glu) in a two-step reaction: glutamate is first activated by ATP to form Glu-AMP and then transferred to the acceptor end of tRNA(Glu). In Rhodospirillum centenum (strain ATCC 51521 / SW), this protein is Glutamate--tRNA ligase 2.